A 224-amino-acid polypeptide reads, in one-letter code: Homeobox protein Hox-B6 (224 aa).

Residues 127–132 (VYPWMQ) carry the Antp-type hexapeptide motif. The homeobox DNA-binding region spans 146-205 (GRRGRQTYTRYQTLELEKEFHYNRYLTRRRRIEIAHALCLTERQIKIWFQNRRMKWKKES). A Phosphoserine modification is found at Ser-214.

Belongs to the Antp homeobox family.

It localises to the nucleus. Its function is as follows. Sequence-specific transcription factor which is part of a developmental regulatory system that provides cells with specific positional identities on the anterior-posterior axis. This chain is Homeobox protein Hox-B6 (HOXB6), found in Homo sapiens (Human).